The chain runs to 420 residues: Serine palmitoyltransferase (420 aa).

Over residues 1–21 the composition is skewed to polar residues; sequence MKHNLQDNLQGEQMANTNSNG. The tract at residues 1 to 25 is disordered; it reads MKHNLQDNLQGEQMANTNSNGGKKP. Pyridoxal 5'-phosphate is bound by residues 132-133, His-233, Thr-261, and Ser-263; that span reads GM. Lys-264 bears the N6-(pyridoxal phosphate)lysine mark.

Belongs to the class-II pyridoxal-phosphate-dependent aminotransferase family. As to quaternary structure, homodimer. It depends on pyridoxal 5'-phosphate as a cofactor.

Its subcellular location is the cytoplasm. It localises to the cell inner membrane. It catalyses the reaction L-serine + hexadecanoyl-CoA + H(+) = 3-oxosphinganine + CO2 + CoA. The protein operates within lipid metabolism; sphingolipid metabolism. Its activity is regulated as follows. Significantly inhibited by palmitoyl-CoA concentrations greater than 100 uM. In terms of biological role, catalyzes the condensation of L-serine with palmitoyl-CoA (hexadecanoyl-CoA) to produce 3-oxosphinganine. This is Serine palmitoyltransferase from Bacteriovorax stolpii (Bdellovibrio stolpii).